Consider the following 372-residue polypeptide: MKYDLIIIGSGSVGAAAGYYATRAGLNVLMTDAHMPPHQHGSHHGDTRLIRHAYGEGEKYVPLVLRAQTLWDDLSRHNEDDPIFVRSGVINLGPADSAFLANVAHSAEQWQLNVEKLDAQGIMARWPEIRVPDNYIGLFETDSGFLRSELAIKTWIQLAKEAGCAQLFNCPVTAIRHEDDGVTIETADGEYQAKKAIVCAGTWVKDLLPELPVQPVRKVFAWYQADGRYSVKNKFPAFTGELPNGDQYYGFPAENDALKIGKHNGGLVIHSADERVPFAEVASDGSEAFPFLRNVLPGIGCCLYGAACTYDNSPDEDFIIDTLPGHDNTLLITGLSGHGFKFASVLGEIAADFAQDKKSDFDLTPFRLSRFQ.

4–34 (DLIIIGSGSVGAAAGYYATRAGLNVLMTDAH) serves as a coordination point for FAD. Residue Cys-308 is modified to S-8alpha-FAD cysteine.

It belongs to the MSOX/MTOX family. MTOX subfamily. As to quaternary structure, monomer. Requires FAD as cofactor.

It carries out the reaction N(alpha)-methyl-L-tryptophan + O2 + H2O = L-tryptophan + formaldehyde + H2O2. Catalyzes the oxidative demethylation of N-methyl-L-tryptophan. The chain is N-methyl-L-tryptophan oxidase from Shigella dysenteriae serotype 1 (strain Sd197).